The chain runs to 652 residues: MKDRMSELVSLLNRYAHEYYTKDAPSVSDSEYDQLYRELVSLEEQYPNEILPESPTHRVGGKVLDGFEKYQHQYPLYSLQDAFSRAELVAFDERVRKEFPDASYLCELKIDGLSISLAYENGILVAGATRGDGSIGENITENLKRVKDIPLTLPEPLTITVRGECYMPKASFDAVNQLRQENGEAEFANPRNAAAGTLRQLDTSVVAKRNLATFLYQEASPTSEATQEDVLEKLSQLGFSVNEKRVLASTIDQVWDFIEKVGQERDKLPYEIDGIVIKVNHLAAQEELGFTVKAPKWAIAYKFPAEEKEAQLLSVDWTVGRTGVVTPTANLTPVQLAGTTVSRATLHNVDYIREKDIRKDDTVIVYKAGDIIPAVLRVVEGKRVSDEHLDVPSKCPSCQSDLLHFEDEVALRCINPLCPAQIMEGLAHFASRDAMNISGLGPAVVEKLFAKDLVRDVAGIYRLNIEDLLQLENFKEKSANKLYNAIQASKSNSAEKLLFGLGIRHVGSKASRILLEKFHDIPSLAQAEQEEIVSIDSLGMVIAKSLHSYFAQEGTQILLKELEEAGVNLAYLGEKAAADAVLSGKTVVLTGKLETLTRTQAKEKLLRLGANVAGSVSKKTDLVIAGADAGSKLAKAQELGIEIQDEAWLEQL.

Residues 29–33, 78–79, and Glu-107 each bind NAD(+); these read DSEYD and SL. Lys-109 (N6-AMP-lysine intermediate) is an active-site residue. Positions 130, 164, 278, and 302 each coordinate NAD(+). Residues Cys-395, Cys-398, Cys-413, and Cys-418 each contribute to the Zn(2+) site. A BRCT domain is found at 577–652; the sequence is AADAVLSGKT…IQDEAWLEQL (76 aa).

Belongs to the NAD-dependent DNA ligase family. LigA subfamily. Mg(2+) serves as cofactor. The cofactor is Mn(2+).

It carries out the reaction NAD(+) + (deoxyribonucleotide)n-3'-hydroxyl + 5'-phospho-(deoxyribonucleotide)m = (deoxyribonucleotide)n+m + AMP + beta-nicotinamide D-nucleotide.. Functionally, DNA ligase that catalyzes the formation of phosphodiester linkages between 5'-phosphoryl and 3'-hydroxyl groups in double-stranded DNA using NAD as a coenzyme and as the energy source for the reaction. It is essential for DNA replication and repair of damaged DNA. In Streptococcus gordonii (strain Challis / ATCC 35105 / BCRC 15272 / CH1 / DL1 / V288), this protein is DNA ligase.